Here is a 330-residue protein sequence, read N- to C-terminus: Fructose-1,6-bisphosphatase class 1 (330 aa).

Glu-78, Asp-97, Leu-99, and Asp-100 together coordinate Mg(2+). Residues 100–103 (DGSS) and Asn-188 each bind substrate. Mg(2+) is bound at residue Glu-260.

The protein belongs to the FBPase class 1 family. In terms of assembly, homotetramer. Requires Mg(2+) as cofactor.

It localises to the cytoplasm. The enzyme catalyses beta-D-fructose 1,6-bisphosphate + H2O = beta-D-fructose 6-phosphate + phosphate. The protein operates within carbohydrate biosynthesis; gluconeogenesis. The polypeptide is Fructose-1,6-bisphosphatase class 1 (Paracoccus denitrificans (strain Pd 1222)).